We begin with the raw amino-acid sequence, 607 residues long: Major facilitator superfamily multidrug transporter mdrA (607 aa).

The next 12 helical transmembrane spans lie at 77 to 97 (MTVA…TGGV), 110 to 130 (VATL…LLWA), 139 to 159 (QIIF…SAGA), 170 to 190 (FFAG…IADM), 202 to 222 (LFAA…GFLG), 229 to 249 (WVMG…TIFV), 305 to 325 (PIVF…YMLF), 342 to 362 (VSSL…TYSV), 385 to 405 (LPPT…FAWT), 413 to 433 (IVCI…FLGI), 443 to 463 (IFAA…GAVF), and 478 to 498 (WASS…FLFY). A disordered region spans residues 523–583 (EQMKQAPEPE…ASTRTASSLR (61 aa)). A compositionally biased stretch (acidic residues) spans 553 to 564 (DVSETESNVEEL). Residues 572–583 (SRASTRTASSLR) are compositionally biased toward low complexity.

This sequence belongs to the major facilitator superfamily. DHA1 family. Polyamines/proton antiporter (TC 2.A.1.2.16) subfamily.

It is found in the cell membrane. MFS transporter involved in the basal level of azole susceptibility. Confers resistance to voriconazole and, to a lesser extent, to fluconazole. This Aspergillus fumigatus (strain ATCC MYA-4609 / CBS 101355 / FGSC A1100 / Af293) (Neosartorya fumigata) protein is Major facilitator superfamily multidrug transporter mdrA.